The chain runs to 86 residues: Small ribosomal subunit protein bS20 (86 aa).

The disordered stretch occupies residues 1-25 (MANSASSRKRARQAVKRNKHNSQIR). Residues 7-25 (SRKRARQAVKRNKHNSQIR) show a composition bias toward basic residues.

The protein belongs to the bacterial ribosomal protein bS20 family.

In terms of biological role, binds directly to 16S ribosomal RNA. The polypeptide is Small ribosomal subunit protein bS20 (Vesicomyosocius okutanii subsp. Calyptogena okutanii (strain HA)).